Here is a 367-residue protein sequence, read N- to C-terminus: Sigma54-dependent transcriptional regulator SfnR (367 aa).

The region spanning 21-250 is the Sigma-54 factor interaction domain; sequence QVFEDPKSQA…LENVIHHTLL (230 aa). Residues 49 to 56 and 112 to 121 each bind ATP; these read GETGTGKE and ADGGTLFLDE.

In terms of biological role, involved in the dimethyl sulfide degradation pathway. Activates the expression of sfnG and sfnF. The sequence is that of Sigma54-dependent transcriptional regulator SfnR from Pseudomonas fluorescens (strain Pf0-1).